The following is a 572-amino-acid chain: Proline--tRNA ligase (572 aa).

The protein belongs to the class-II aminoacyl-tRNA synthetase family. ProS type 1 subfamily. In terms of assembly, homodimer.

It is found in the cytoplasm. The catalysed reaction is tRNA(Pro) + L-proline + ATP = L-prolyl-tRNA(Pro) + AMP + diphosphate. Its function is as follows. Catalyzes the attachment of proline to tRNA(Pro) in a two-step reaction: proline is first activated by ATP to form Pro-AMP and then transferred to the acceptor end of tRNA(Pro). As ProRS can inadvertently accommodate and process non-cognate amino acids such as alanine and cysteine, to avoid such errors it has two additional distinct editing activities against alanine. One activity is designated as 'pretransfer' editing and involves the tRNA(Pro)-independent hydrolysis of activated Ala-AMP. The other activity is designated 'posttransfer' editing and involves deacylation of mischarged Ala-tRNA(Pro). The misacylated Cys-tRNA(Pro) is not edited by ProRS. The chain is Proline--tRNA ligase from Alteromonas mediterranea (strain DSM 17117 / CIP 110805 / LMG 28347 / Deep ecotype).